We begin with the raw amino-acid sequence, 299 residues long: Oxygen-dependent coproporphyrinogen-III oxidase (299 aa).

A substrate-binding site is contributed by Ser92. His96 and His106 together coordinate a divalent metal cation. His106 acts as the Proton donor in catalysis. 108–110 (NVR) lines the substrate pocket. A divalent metal cation-binding residues include His145 and His175. The segment at 240 to 275 (YVEFNLVWDRGTLFGLQTGGRTESILMSMPPLVRWE) is important for dimerization. Substrate is bound at residue 258-260 (GGR).

It belongs to the aerobic coproporphyrinogen-III oxidase family. Homodimer. The cofactor is a divalent metal cation.

The protein localises to the cytoplasm. It catalyses the reaction coproporphyrinogen III + O2 + 2 H(+) = protoporphyrinogen IX + 2 CO2 + 2 H2O. Its pathway is porphyrin-containing compound metabolism; protoporphyrin-IX biosynthesis; protoporphyrinogen-IX from coproporphyrinogen-III (O2 route): step 1/1. Involved in the heme biosynthesis. Catalyzes the aerobic oxidative decarboxylation of propionate groups of rings A and B of coproporphyrinogen-III to yield the vinyl groups in protoporphyrinogen-IX. The polypeptide is Oxygen-dependent coproporphyrinogen-III oxidase (Shigella flexneri).